The following is a 283-amino-acid chain: Undecaprenyl-diphosphatase (283 aa).

The next 7 membrane-spanning stretches (helical) occupy residues 1–21 (MDIIQAIVLGIIQGLTEFLPI), 40–60 (GAAFTAIIQIGTLAAVLIYFY), 85–105 (SRMGWMISAGTIPIVVLGLLF), 117–137 (YIISGSLILLALVLMYAEYLV), 196–216 (FSFLLSLPAVFAAGVYQLLKV), 232–252 (VATVVSGVIGYASIAFLLDYL), and 258–278 (YLFIIYRILLGVFLLAMLSMG).

The protein belongs to the UppP family.

Its subcellular location is the cell inner membrane. The enzyme catalyses di-trans,octa-cis-undecaprenyl diphosphate + H2O = di-trans,octa-cis-undecaprenyl phosphate + phosphate + H(+). Catalyzes the dephosphorylation of undecaprenyl diphosphate (UPP). Confers resistance to bacitracin. In Chloroherpeton thalassium (strain ATCC 35110 / GB-78), this protein is Undecaprenyl-diphosphatase.